Reading from the N-terminus, the 449-residue chain is Elongation factor 1-alpha C (449 aa).

The region spanning 5 to 234 (KQHVSIVVIG…DACDPPKRPV (230 aa)) is the tr-type G domain. The segment at 14–21 (GHVDSGKS) is G1. 14–21 (GHVDSGKS) contacts GTP. K55 is modified (N6,N6-dimethyllysine). The tract at residues 70–74 (GITID) is G2. K79 carries the N6,N6,N6-trimethyllysine modification. The segment at 91–94 (DAPG) is G3. GTP is bound by residues 91–95 (DAPGH) and 153–156 (NKMD). The interval 153–156 (NKMD) is G4. K187 is modified (N6,N6,N6-trimethyllysine). The segment at 194–196 (SGW) is G5. K265 is modified (N6-methyllysine). 2 positions are modified to N6,N6,N6-trimethyllysine: K310 and K400.

Belongs to the TRAFAC class translation factor GTPase superfamily. Classic translation factor GTPase family. EF-Tu/EF-1A subfamily.

The protein localises to the cytoplasm. This protein promotes the GTP-dependent binding of aminoacyl-tRNA to the A-site of ribosomes during protein biosynthesis. The sequence is that of Elongation factor 1-alpha C (TEF-C) from Porphyra purpurea (Red seaweed).